Consider the following 199-residue polypeptide: MTPKLILASSSPFRRMLMENAGLFFEAHPAEIDERAVEAPLEKAGAKPDTVACVLAKAKAEDVSARFPESLVIGSDQTMSLGDRVFHKPKDIADAANHLRALSGTTHRLNSAIVLVRDGAVLWEHVGHAELTMRPLTEDFIARHLSRVGERALSSVGAYQLEGEGVQLFEKIEGDYFTILGLPMLPLLGKLRELGTIDG.

The active-site Proton acceptor is D76.

Belongs to the Maf family. YceF subfamily. A divalent metal cation serves as cofactor.

The protein localises to the cytoplasm. It carries out the reaction N(7)-methyl-GTP + H2O = N(7)-methyl-GMP + diphosphate + H(+). In terms of biological role, nucleoside triphosphate pyrophosphatase that hydrolyzes 7-methyl-GTP (m(7)GTP). May have a dual role in cell division arrest and in preventing the incorporation of modified nucleotides into cellular nucleic acids. The sequence is that of 7-methyl-GTP pyrophosphatase from Rhizobium etli (strain ATCC 51251 / DSM 11541 / JCM 21823 / NBRC 15573 / CFN 42).